The primary structure comprises 240 residues: Ribosomal RNA large subunit methyltransferase E (240 aa).

The span at 1-13 shows a compositional bias: polar residues; that stretch reads MAKKPGSQNTSGR. The segment at 1 to 20 is disordered; sequence MAKKPGSQNTSGRGQRDLKV. S-adenosyl-L-methionine contacts are provided by Gly85, Trp87, Asp113, Asp129, and Asp153. The active-site Proton acceptor is the Lys193.

It belongs to the class I-like SAM-binding methyltransferase superfamily. RNA methyltransferase RlmE family.

The protein localises to the cytoplasm. It carries out the reaction uridine(2552) in 23S rRNA + S-adenosyl-L-methionine = 2'-O-methyluridine(2552) in 23S rRNA + S-adenosyl-L-homocysteine + H(+). Functionally, specifically methylates the uridine in position 2552 of 23S rRNA at the 2'-O position of the ribose in the fully assembled 50S ribosomal subunit. This chain is Ribosomal RNA large subunit methyltransferase E, found in Roseobacter denitrificans (strain ATCC 33942 / OCh 114) (Erythrobacter sp. (strain OCh 114)).